The chain runs to 119 residues: Large ribosomal subunit protein bL20 (119 aa).

The protein belongs to the bacterial ribosomal protein bL20 family.

In terms of biological role, binds directly to 23S ribosomal RNA and is necessary for the in vitro assembly process of the 50S ribosomal subunit. It is not involved in the protein synthesizing functions of that subunit. The chain is Large ribosomal subunit protein bL20 from Acidithiobacillus ferrooxidans (strain ATCC 23270 / DSM 14882 / CIP 104768 / NCIMB 8455) (Ferrobacillus ferrooxidans (strain ATCC 23270)).